Reading from the N-terminus, the 302-residue chain is Aspartate carbamoyltransferase catalytic subunit (302 aa).

Residues R54 and T55 each coordinate carbamoyl phosphate. L-aspartate is bound at residue K82. Positions 104, 132, and 135 each coordinate carbamoyl phosphate. The L-aspartate site is built by R165 and R217. 2 residues coordinate carbamoyl phosphate: G257 and P258.

This sequence belongs to the aspartate/ornithine carbamoyltransferase superfamily. ATCase family. Heterododecamer (2C3:3R2) of six catalytic PyrB chains organized as two trimers (C3), and six regulatory PyrI chains organized as three dimers (R2).

It carries out the reaction carbamoyl phosphate + L-aspartate = N-carbamoyl-L-aspartate + phosphate + H(+). It participates in pyrimidine metabolism; UMP biosynthesis via de novo pathway; (S)-dihydroorotate from bicarbonate: step 2/3. Functionally, catalyzes the condensation of carbamoyl phosphate and aspartate to form carbamoyl aspartate and inorganic phosphate, the committed step in the de novo pyrimidine nucleotide biosynthesis pathway. The protein is Aspartate carbamoyltransferase catalytic subunit of Thermus thermophilus (strain ATCC BAA-163 / DSM 7039 / HB27).